The sequence spans 310 residues: MASVTAAMVKDLREKTGAGMMDCKNALNETGGDIEAAIDWLRKKGLSKAAKKSGRIAAEGLVAVAVHETDGVVVEVNSETDFVARNEEFQALARTIALVAVEKGLTDVEALKGAHYPGGSTVAEAIANSVATIGENMTLRRVAAVNVAQGVVGQYVHNAVADGLGKIGVIVGLESTGDAVVLAPLARLIALHIAAASPLALEAADLDPAVVAREKAVLADKNAGKPPQVLEKIVESGLKTFYKEVCLVDQPSIHADHANKTIGQVVKEAEKAAGAPVKLKAFVRYALGEGIEKQESDFAAEVAAAASGQL.

An involved in Mg(2+) ion dislocation from EF-Tu region spans residues 80 to 83 (TDFV).

It belongs to the EF-Ts family.

The protein resides in the cytoplasm. Functionally, associates with the EF-Tu.GDP complex and induces the exchange of GDP to GTP. It remains bound to the aminoacyl-tRNA.EF-Tu.GTP complex up to the GTP hydrolysis stage on the ribosome. The sequence is that of Elongation factor Ts from Methylocella silvestris (strain DSM 15510 / CIP 108128 / LMG 27833 / NCIMB 13906 / BL2).